An 867-amino-acid polypeptide reads, in one-letter code: Probable alpha,alpha-trehalose-phosphate synthase [UDP-forming] 9 (867 aa).

Ser5 carries the phosphoserine modification. Phosphothreonine is present on Thr32. The interval 59-546 (ERKIIVANML…AKSFMQDLER (488 aa)) is glycosyltransferase.

The protein in the N-terminal section; belongs to the glycosyltransferase 20 family. It in the C-terminal section; belongs to the trehalose phosphatase family.

It carries out the reaction D-glucose 6-phosphate + UDP-alpha-D-glucose = alpha,alpha-trehalose 6-phosphate + UDP + H(+). This Arabidopsis thaliana (Mouse-ear cress) protein is Probable alpha,alpha-trehalose-phosphate synthase [UDP-forming] 9 (TPS9).